The following is a 505-amino-acid chain: ATP synthase subunit alpha, chloroplastic (505 aa).

Residue 172–179 (GDRQTGKT) participates in ATP binding.

It belongs to the ATPase alpha/beta chains family. F-type ATPases have 2 components, CF(1) - the catalytic core - and CF(0) - the membrane proton channel. CF(1) has five subunits: alpha(3), beta(3), gamma(1), delta(1), epsilon(1). CF(0) has four main subunits: a, b, b' and c.

It is found in the plastid. It localises to the chloroplast thylakoid membrane. It catalyses the reaction ATP + H2O + 4 H(+)(in) = ADP + phosphate + 5 H(+)(out). In terms of biological role, produces ATP from ADP in the presence of a proton gradient across the membrane. The alpha chain is a regulatory subunit. The sequence is that of ATP synthase subunit alpha, chloroplastic from Antithamnion sp. (Red alga).